A 199-amino-acid chain; its full sequence is Potassium-transporting ATPase KdpC subunit 2 (199 aa).

A helical transmembrane segment spans residues Ile13–Gly33.

The protein belongs to the KdpC family. In terms of assembly, the system is composed of three essential subunits: KdpA, KdpB and KdpC.

It is found in the cell inner membrane. Functionally, part of the high-affinity ATP-driven potassium transport (or Kdp) system, which catalyzes the hydrolysis of ATP coupled with the electrogenic transport of potassium into the cytoplasm. This subunit acts as a catalytic chaperone that increases the ATP-binding affinity of the ATP-hydrolyzing subunit KdpB by the formation of a transient KdpB/KdpC/ATP ternary complex. This Nostoc sp. (strain PCC 7120 / SAG 25.82 / UTEX 2576) protein is Potassium-transporting ATPase KdpC subunit 2.